The primary structure comprises 177 residues: Meiotic chromosome segregation protein C17A2.07c (177 aa).

The disordered stretch occupies residues 71–90 (EDDSINKPTEEADEAPRTQL). Over residues 74–86 (SINKPTEEADEAP) the composition is skewed to basic and acidic residues.

The protein localises to the nucleus. Involved in meiotic chromosome segregation. This is Meiotic chromosome segregation protein C17A2.07c from Schizosaccharomyces pombe (strain 972 / ATCC 24843) (Fission yeast).